Consider the following 201-residue polypeptide: Potassium-transporting ATPase KdpC subunit (201 aa).

Residues 10–30 (VVLVVLTVICGLAYPLAMTGI) traverse the membrane as a helical segment. The segment at 67–105 (HGRPSATSAADPADPTKTVSSPYNAANSSGSNLGPTSKA) is disordered. Positions 70–82 (PSATSAADPADPT) are enriched in low complexity. Polar residues predominate over residues 83–105 (KTVSSPYNAANSSGSNLGPTSKA).

The protein belongs to the KdpC family. The system is composed of three essential subunits: KdpA, KdpB and KdpC.

It is found in the cell inner membrane. Part of the high-affinity ATP-driven potassium transport (or Kdp) system, which catalyzes the hydrolysis of ATP coupled with the electrogenic transport of potassium into the cytoplasm. This subunit acts as a catalytic chaperone that increases the ATP-binding affinity of the ATP-hydrolyzing subunit KdpB by the formation of a transient KdpB/KdpC/ATP ternary complex. This chain is Potassium-transporting ATPase KdpC subunit, found in Rhodopseudomonas palustris (strain BisB5).